Here is a 193-residue protein sequence, read N- to C-terminus: Achaete-scute homolog 2 (193 aa).

Disordered stretches follow at residues 1–27, 37–56, and 118–177; these read MDGG…RRPA, RRRP…ARRN, and GGLR…GALS. In terms of domain architecture, bHLH spans 50–102; the sequence is AAVARRNERERNRVKLVNLGFQALRQHVPHGGASKKLSKVETLRSAVEYIRAL. The segment covering 140–150 has biased composition (low complexity); the sequence is AASPSRASSSP.

In terms of assembly, efficient DNA binding requires dimerization with another basic helix-loop-helix (bHLH) protein. Forms heterodimers with bHLH transcription factor TCF3. May not heterodimerise with bHLH protein HAND1. As to expression, expressed in the placenta at a stage between the first and second trimesters and when it matures, at about 32-36 weeks. Expressed in the extravillous trophoblasts, the intermediate trophoblasts, and at lower levels in the cytotrophoblasts and stroma of chorionic villi of the developing placenta. Expressed in follicular T-helper (Tfh) cells.

The protein localises to the nucleus. Its function is as follows. Transcription factor. Binds to E-box motifs 5'-CANNTG-3' in the regulatory elements of target genes, probably as a heterodimer with another basic helix-loop-helix (bHLH) protein such as the transcription factor TCF3. May bind both open and closed chromatin, acting as a pioneer transcription factor to allow other factors to bind and activate lineage-specific genes. Required during post-implantation development for the generation of some differentiated trophoblast cell types. Transcriptional activity of ASCL2 may be antagonised in a subset of trophoblast cells by bHLH transcription factor HAND1, perhaps by competing for dimerization with other bHLH proteins. Involved in differentiation and function of follicular T-helper (Tfh) cells, thereby playing a role in germinal center responses; probably modulates expression of genes involved in Tfh cell function, such as BCL6. May also act as a suppressor of Th1-, Th2- and Th17-cell differentiation. Induces the formation of stem cells in intestinal crypts in vitro, synergistically activating transcription of target genes, such as SOX9, together with TCF4/beta-catenin. May form a bistable transcriptional switch, controlling expression of its own gene together with Wnt/R-spondin signaling, and thereby maintaining stem cell characteristics. Modulates expression of target genes, including perhaps down-regulating EGR1/Krox24 and chemokine CXCL10/Mob-1 and up-regulating CXCR4 and CDKN1C/p57kip2, in Schwann cells. May play a role in reducing proliferation of Schwann cells, perhaps acting via modulation of expression of CDKN1C. May be dispensable for blastocyst formation and later embryonic function. May be involved in the determination of neuronal precursors. The polypeptide is Achaete-scute homolog 2 (ASCL2) (Homo sapiens (Human)).